A 504-amino-acid chain; its full sequence is tRNA (uracil-5-)-methyltransferase homolog B (504 aa).

Residues 1–16 (MAGLKRRVPLHSLRYF) constitute a mitochondrion transit peptide. The S-adenosyl-L-methionine site is built by glutamine 323, glutamate 373, and asparagine 423. The active-site Nucleophile is the cysteine 451. The Proton acceptor role is filled by glutamate 497.

This sequence belongs to the class I-like SAM-binding methyltransferase superfamily. RNA M5U methyltransferase family.

It localises to the mitochondrion. It is found in the mitochondrion matrix. The catalysed reaction is uridine(54) in tRNA + S-adenosyl-L-methionine = 5-methyluridine(54) in tRNA + S-adenosyl-L-homocysteine + H(+). It catalyses the reaction a uridine in 12S rRNA + S-adenosyl-L-methionine = a 5-methyluridine in 12S rRNA + S-adenosyl-L-homocysteine + H(+). Its function is as follows. Mitochondrial S-adenosyl-L-methionine-dependent methyltransferase that catalyzes the formation of 5-methyl-uridine in tRNAs and 12S rRNA. Catalyzes the methylation of uridine at position 54 (m5U54) in all tRNAs. Specifically methylates the uridine in position 429 of 12S rRNA (m5U429). Does not affect RNA stability or mitochondrial translation. This is tRNA (uracil-5-)-methyltransferase homolog B from Homo sapiens (Human).